Reading from the N-terminus, the 571-residue chain is Sulfite reductase [NADPH] hemoprotein beta-component (571 aa).

Residues C436, C442, C481, and C485 each coordinate [4Fe-4S] cluster. Residue C485 coordinates siroheme.

The protein belongs to the nitrite and sulfite reductase 4Fe-4S domain family. Alpha(8)-beta(8). The alpha component is a flavoprotein, the beta component is a hemoprotein. Siroheme is required as a cofactor. [4Fe-4S] cluster serves as cofactor.

It carries out the reaction hydrogen sulfide + 3 NADP(+) + 3 H2O = sulfite + 3 NADPH + 4 H(+). It functions in the pathway sulfur metabolism; hydrogen sulfide biosynthesis; hydrogen sulfide from sulfite (NADPH route): step 1/1. Component of the sulfite reductase complex that catalyzes the 6-electron reduction of sulfite to sulfide. This is one of several activities required for the biosynthesis of L-cysteine from sulfate. The sequence is that of Sulfite reductase [NADPH] hemoprotein beta-component (cysI) from Bacillus subtilis (strain 168).